The primary structure comprises 450 residues: Saccharopine dehydrogenase [NADP(+), L-glutamate-forming] (450 aa).

NADP(+) contacts are provided by residues 11–14 (SGFV), 33–35 (CRT), 55–56 (DV), I76, 98–99 (TS), 125–127 (LDP), and S175. Residues 99-100 (SY) and D126 each bind L-saccharopine. Residues R224 and 245 to 247 (TLR) each bind L-saccharopine.

This sequence belongs to the saccharopine dehydrogenase family. Homodimer.

It carries out the reaction L-saccharopine + NADP(+) + H2O = (S)-2-amino-6-oxohexanoate + L-glutamate + NADPH + H(+). The protein operates within amino-acid biosynthesis; L-lysine biosynthesis via AAA pathway; L-lysine from L-alpha-aminoadipate (fungal route): step 2/3. The chain is Saccharopine dehydrogenase [NADP(+), L-glutamate-forming] (LYS3) from Pyricularia oryzae (strain 70-15 / ATCC MYA-4617 / FGSC 8958) (Rice blast fungus).